The primary structure comprises 188 residues: Scytalone dehydratase (188 aa).

Y27, Y47, and F50 together coordinate substrate. Catalysis depends on residues H82 and H107. N128 is a substrate binding site.

The protein belongs to the scytalone dehydratase family. Homotrimer. Each subunit contains an active site, located in the central part of the hydrophobic core of the monomer, which functions independently.

Its subcellular location is the endosome. The enzyme catalyses scytalone = 1,3,8-trihydroxynaphthalene + H2O. It functions in the pathway pigment biosynthesis; melanin biosynthesis. Its activity is regulated as follows. Carpropamid acts as an efficient inhibitor of scytalone dehydratase activity. In terms of biological role, scytalone dehydratase; part of the gene cluster that mediates the biosynthesis of dihydroxynaphthalene (DHN)-melanin, a bluish-green pigment and a structural component of the conidial wall. Within the pathway, catalyzes the dehydration of scytalone as well as of vermelone. The protein is Scytalone dehydratase of Colletotrichum orbiculare (strain 104-T / ATCC 96160 / CBS 514.97 / LARS 414 / MAFF 240422) (Cucumber anthracnose fungus).